A 203-amino-acid chain; its full sequence is uncharacterized protein (203 aa).

This is an uncharacterized protein from Haemophilus influenzae (strain ATCC 51907 / DSM 11121 / KW20 / Rd).